Reading from the N-terminus, the 448-residue chain is tRNA modification GTPase MnmE (448 aa).

Arg24, Glu81, and Lys120 together coordinate (6S)-5-formyl-5,6,7,8-tetrahydrofolate. The TrmE-type G domain occupies 216–373; that stretch reads GLNVVLVGAP…LKRTLLREAG (158 aa). A K(+)-binding site is contributed by Asn226. Residues 226–231, 245–251, and 270–273 contribute to the GTP site; these read NVGKSS, TDIAGTT, and DTAG. Ser230 provides a ligand contact to Mg(2+). K(+) contacts are provided by Thr245, Ile247, and Thr250. Position 251 (Thr251) interacts with Mg(2+). (6S)-5-formyl-5,6,7,8-tetrahydrofolate is bound at residue Lys448.

The protein belongs to the TRAFAC class TrmE-Era-EngA-EngB-Septin-like GTPase superfamily. TrmE GTPase family. In terms of assembly, homodimer. Heterotetramer of two MnmE and two MnmG subunits. It depends on K(+) as a cofactor.

It is found in the cytoplasm. In terms of biological role, exhibits a very high intrinsic GTPase hydrolysis rate. Involved in the addition of a carboxymethylaminomethyl (cmnm) group at the wobble position (U34) of certain tRNAs, forming tRNA-cmnm(5)s(2)U34. This is tRNA modification GTPase MnmE from Neisseria meningitidis serogroup A / serotype 4A (strain DSM 15465 / Z2491).